The primary structure comprises 329 residues: Ribosomal RNA small subunit methyltransferase C (329 aa).

It belongs to the methyltransferase superfamily. RsmC family. In terms of assembly, monomer.

It localises to the cytoplasm. The catalysed reaction is guanosine(1207) in 16S rRNA + S-adenosyl-L-methionine = N(2)-methylguanosine(1207) in 16S rRNA + S-adenosyl-L-homocysteine + H(+). Its function is as follows. Specifically methylates the guanine in position 1207 of 16S rRNA in the 30S particle. The protein is Ribosomal RNA small subunit methyltransferase C of Actinobacillus pleuropneumoniae serotype 5b (strain L20).